A 248-amino-acid chain; its full sequence is Probable transcriptional regulatory protein FTW_1073 (248 aa).

This sequence belongs to the TACO1 family.

It is found in the cytoplasm. In Francisella tularensis subsp. tularensis (strain WY96-3418), this protein is Probable transcriptional regulatory protein FTW_1073.